The sequence spans 391 residues: Polyketide synthase 1 (391 aa).

Residue C164 is part of the active site.

The protein belongs to the thiolase-like superfamily. Chalcone/stilbene synthases family. In terms of assembly, homodimer. In terms of tissue distribution, expressed in fruits.

It carries out the reaction (E)-4-coumaroyl-CoA + 3 malonyl-CoA + 3 H(+) = 2',4,4',6'-tetrahydroxychalcone + 3 CO2 + 4 CoA. The protein operates within secondary metabolite biosynthesis; flavonoid biosynthesis. Its function is as follows. Polyketide synthase producing naringenin chalcone and slightly p-coumaryltriacetic acid lactone (CTAL). Can use p-coumaryl-CoA as substrate. The protein is Polyketide synthase 1 (PKS1) of Rubus idaeus (Raspberry).